The chain runs to 109 residues: Flagellar hook-basal body complex protein FliE (109 aa).

Belongs to the FliE family.

It localises to the bacterial flagellum basal body. In Pseudomonas syringae pv. tomato (strain ATCC BAA-871 / DC3000), this protein is Flagellar hook-basal body complex protein FliE.